The primary structure comprises 463 residues: Nucleobindin-1 (463 aa).

The signal sequence occupies residues 1–26 (MPPSGPQGTLLLLPLLLLLLLRAVLA). Phosphoserine is present on serine 86. Position 148 is a phosphothreonine (threonine 148). Residues 150–218 (EARDLELLIQ…QQRRHREHPK (69 aa)) adopt a coiled-coil conformation. A DNA-binding region spans residues 172-218 (HHEEFKRYEMLKEHERRRYLESLGEEQRKEAERRLEEQQRRHREHPK). Residues 193–210 (SLGEEQRKEAERRLEEQQ) are compositionally biased toward basic and acidic residues. Residues 193–221 (SLGEEQRKEAERRLEEQQRRHREHPKVNV) are disordered. The binds to GNAI2 and GNAI3 stretch occupies residues 228 to 321 (LKEVWEELDG…VTLGEFLAST (94 aa)). 2 consecutive EF-hand domains span residues 240–275 (PNRF…ELEK) and 292–327 (ERLR…KEFG). Residues aspartate 253, asparagine 255, aspartate 257, glutamate 264, aspartate 305, asparagine 307, aspartate 309, and glutamate 316 each contribute to the Ca(2+) site. The GBA signature appears at 303–333 (NVDTNQDRLVTLGEFLASTQRKEFGDTGEGW). The stretch at 341-409 (AYTEEELRRF…KQQQQQQQQQ (69 aa)) forms a coiled coil. The disordered stretch occupies residues 368–463 (LSQETEALGR…LPEVEVPQHL (96 aa)). The residue at position 369 (serine 369) is a Phosphoserine. Residues 439-463 (DQKEVDTSEKKLLERLPEVEVPQHL) show a composition bias toward basic and acidic residues.

It belongs to the nucleobindin family. In terms of assembly, interacts (via GBA motif) with guanine nucleotide-binding protein G(i) alpha subunits GNAI1, GNAI2 and GNAI3 with higher affinity for GNAI1 and GNAI3 than for GNAI2. Preferentially interacts with inactive rather than active GNAI3. Interaction with GNAI3 is inhibited when NUCB1 binds calcium, probably due to a conformational change which renders the GBA motif inaccessible.

Its subcellular location is the golgi apparatus. It is found in the cis-Golgi network membrane. The protein localises to the cytoplasm. The protein resides in the secreted. Major calcium-binding protein of the Golgi which may have a role in calcium homeostasis. Acts as a non-receptor guanine nucleotide exchange factor which binds to and activates alpha subunits of guanine nucleotide-binding proteins (G proteins). In Pongo abelii (Sumatran orangutan), this protein is Nucleobindin-1 (NUCB1).